A 508-amino-acid polypeptide reads, in one-letter code: Protein disulfide-isomerase (508 aa).

The first 17 residues, methionine 1–alanine 17, serve as a signal peptide directing secretion. One can recognise a Thioredoxin 1 domain in the interval aspartate 18 to glycine 134. Residues cysteine 53 and cysteine 56 each act as nucleophile in the active site. A disulfide bridge connects residues cysteine 53 and cysteine 56. An N6-acetyllysine modification is found at lysine 200. 2 positions are modified to N6-succinyllysine: lysine 222 and lysine 271. Serine 331 carries the post-translational modification Phosphoserine. One can recognise a Thioredoxin 2 domain in the interval glycine 349–glutamine 475. Serine 357 bears the Phosphoserine; by FAM20C mark. Residues cysteine 397 and cysteine 400 each act as nucleophile in the active site. A disulfide bridge connects residues cysteine 397 and cysteine 400. Serine 427 carries the phosphoserine modification. The segment at glutamate 471 to leucine 508 is disordered. The segment covering alanine 478–aspartate 500 has biased composition (acidic residues). A Prevents secretion from ER motif is present at residues lysine 505–leucine 508.

It belongs to the protein disulfide isomerase family. Heterodimer; heterodimerizes with the protein microsomal triglyceride transfer MTTP. Homodimer. Monomers and homotetramers may also occur. Interacts with P4HA2, forming a heterotetramer consisting of 2 alpha subunits (P4HA2) and 2 beta (P4HB), where P4HB plays the role of a structural subunit; this tetramer catalyzes the formation of 4-hydroxyproline in collagen. Also constitutes the structural subunit of the microsomal triacylglycerol transfer protein MTTP in mammalian cells. Stabilizes both enzymes and retain them in the ER without contributing to the catalytic activity. Binds UBQLN1. Interacts with ERO1B. Binds to CD4, and upon HIV-1 binding to the cell membrane, is part of a P4HB/PDI-CD4-CXCR4-gp120 complex. Interacts with ILDR2. Interacts with ERN1/IRE1A (via N-terminus); the interaction is enhanced by phosphorylation of P4HB by FAM20C in response to endoplasmic reticulum stress and results in attenuation of ERN1 activity. Post-translationally, phosphorylation of Ser-357 by FAM20C is induced by endoplasmic reticulum stress and results in a functional switch from oxidoreductase to molecular chaperone. It also promotes interaction with ERN1.

It localises to the endoplasmic reticulum. The protein resides in the endoplasmic reticulum lumen. The protein localises to the melanosome. Its subcellular location is the cell membrane. It carries out the reaction Catalyzes the rearrangement of -S-S- bonds in proteins.. Its function is as follows. This multifunctional protein catalyzes the formation, breakage and rearrangement of disulfide bonds. At the cell surface, seems to act as a reductase that cleaves disulfide bonds of proteins attached to the cell. May therefore cause structural modifications of exofacial proteins. Inside the cell, seems to form/rearrange disulfide bonds of nascent proteins. At high concentrations and following phosphorylation by FAM20C, functions as a chaperone that inhibits aggregation of misfolded proteins. At low concentrations, facilitates aggregation (anti-chaperone activity). May be involved with other chaperones in the structural modification of the TG precursor in hormone biogenesis. Also acts as a structural subunit of various enzymes such as prolyl 4-hydroxylase and microsomal triacylglycerol transfer protein MTTP. Receptor for LGALS9; the interaction retains P4HB at the cell surface of Th2 T helper cells, increasing disulfide reductase activity at the plasma membrane, altering the plasma membrane redox state and enhancing cell migration. This is Protein disulfide-isomerase (P4HB) from Homo sapiens (Human).